Consider the following 245-residue polypeptide: MRTLFIADLHLSEKHPQISHAFFEFLQNETENVDALYILGDLFEVWIGDDERTLLMNEVALKLSEYALKNNILLYYIHGNRDFMIGKKYAKQSSMQLLPEHCEINLYGKKILILHGDTLCLADKNYQKMRTLLHNPLIQLVFNLLPLFLRKKIGWKIRHASQSKKVYKNREVMDVTKDEVVRLMEKHHVQTLIHGHTHRVACHEMLVKGQAAQRYDVGDWRHNLSYVEVQKDKINLVIRPINFYN.

Positions 8, 10, 41, 80, and 115 each coordinate Mn(2+). Residue 80–81 (NR) coordinates substrate. Substrate contacts are provided by Asp123, Ser161, Lys165, Lys168, and His196. Residues His196 and His198 each coordinate Mn(2+).

Belongs to the LpxH family. Requires Mn(2+) as cofactor.

It is found in the cell inner membrane. The catalysed reaction is UDP-2-N,3-O-bis[(3R)-3-hydroxytetradecanoyl]-alpha-D-glucosamine + H2O = 2-N,3-O-bis[(3R)-3-hydroxytetradecanoyl]-alpha-D-glucosaminyl 1-phosphate + UMP + 2 H(+). It functions in the pathway glycolipid biosynthesis; lipid IV(A) biosynthesis; lipid IV(A) from (3R)-3-hydroxytetradecanoyl-[acyl-carrier-protein] and UDP-N-acetyl-alpha-D-glucosamine: step 4/6. Hydrolyzes the pyrophosphate bond of UDP-2,3-diacylglucosamine to yield 2,3-diacylglucosamine 1-phosphate (lipid X) and UMP by catalyzing the attack of water at the alpha-P atom. Involved in the biosynthesis of lipid A, a phosphorylated glycolipid that anchors the lipopolysaccharide to the outer membrane of the cell. The sequence is that of UDP-2,3-diacylglucosamine hydrolase from Psychromonas ingrahamii (strain DSM 17664 / CCUG 51855 / 37).